The sequence spans 337 residues: Putative 4-hydroxythreonine-4-phosphate dehydrogenase (337 aa).

Histidine 172, histidine 216, and histidine 271 together coordinate a divalent metal cation.

It belongs to the PdxA family. In terms of assembly, homodimer. Requires Zn(2+) as cofactor. The cofactor is Mg(2+). Co(2+) is required as a cofactor.

The protein localises to the cytoplasm. It catalyses the reaction 4-(phosphooxy)-L-threonine + NAD(+) = 3-amino-2-oxopropyl phosphate + CO2 + NADH. Its pathway is cofactor biosynthesis; pyridoxine 5'-phosphate biosynthesis; pyridoxine 5'-phosphate from D-erythrose 4-phosphate: step 4/5. Its function is as follows. Catalyzes the NAD(P)-dependent oxidation of 4-(phosphooxy)-L-threonine (HTP) into 2-amino-3-oxo-4-(phosphooxy)butyric acid which spontaneously decarboxylates to form 3-amino-2-oxopropyl phosphate (AHAP). The protein is Putative 4-hydroxythreonine-4-phosphate dehydrogenase of Pasteurella multocida (strain Pm70).